The chain runs to 276 residues: Rhomboid protease GlpG (276 aa).

The next 6 membrane-spanning stretches (helical) occupy residues 94-114 (GPFTWAILLICIAVFILQNLL), 142-162 (AFMHFSLMHILFNLLWWWYLG), 169-189 (IGSGKLVVITVISALLSGFVQ), 192-212 (FSGPWFGGLSGVVYALMGYVW), 229-249 (LILFSLVWLIAGWFDVFGMAI), and 252-272 (GAHVAGLATGLAMAFVDTLHG). Residue serine 201 is the Nucleophile of the active site. Histidine 254 is a catalytic residue.

The protein belongs to the peptidase S54 family.

The protein resides in the cell inner membrane. It catalyses the reaction Cleaves type-1 transmembrane domains using a catalytic dyad composed of serine and histidine that are contributed by different transmembrane domains.. In terms of biological role, rhomboid-type serine protease that catalyzes intramembrane proteolysis. The protein is Rhomboid protease GlpG of Klebsiella pneumoniae (strain 342).